A 1960-amino-acid chain; its full sequence is MQSFREQSSYHGNQQSYPQEVHGSSRLEEFSPRQAQMFQNFGGTGGSSGSSGSGSGGGRRGAAAAAAAMASETSGHQGYQGFRKEAGDFYYMAGNKDPVTTGTPQPPQRRPSGPVQSYGPPQGSSFGNQYGSEGHVGQFQAQHSGLGGVSHYQQDYTGPFSPGSAQYQQQASSQQQQQQVQQLRQQLYQSHQPLPQATGQPASSSSHLQPMQRPSTLPSSAAGYQLRVGQFGQHYQSSASSSSSSSFPSPQRFSQSGQSYDGSYNVNAGSQYEGHNVGSNAQAYGTQSNYSYQPQSMKNFEQAKIPQGTQQGQQQQQPQQQQHPSQHVMQYTNAATKLPLQSQVGQYNQPEVPVRSPMQFHQNFSPISNPSPAASVVQSPSCSSTPSPLMQTGENLQCGQGSVPMGSRNRILQLMPQLSPTPSMMPSPNSHAAGFKGFGLEGVPEKRLTDPGLSSLSALSTQVANLPNTVQHMLLSDALTPQKKTSKRPSSSKKADSCTNSEGSSQPEEQLKSPMAESLDGGCSSSSEDQGERVRQLSGQSTSSDTTYKGGASEKAGSSPAQGAQNEPPRLNASPAAREEATSPGAKDMPLSSDGNPKVNEKTVGVIVSREAMTGRVEKPGGQDKGSQEDDPAATQRPPSNGGAKETSHASLPQPEPPGGGGSKGNKNGDNNSNHNGEGNGQSGHSAAGPGFTSRTEPSKSPGSLRYSYKDSFGSAVPRNVSGFPQYPTGQEKGDFTGHGERKGRNEKFPSLLQEVLQGYHHHPDRRYSRSTQEHQGMAGSLEGTTRPNVLVSQTNELASRGLLNKSIGSLLENPHWGPWERKSSSTAPEMKQINLTDYPIPRKFEIEPQSSAHEPGGSLSERRSVICDISPLRQIVRDPGAHSLGHMSADTRIGRNDRLNPTLSQSVILPGGLVSMETKLKSQSGQIKEEDFEQSKSQASFNNKKSGDHCHPPSIKHESYRGNASPGAATHDSLSDYGPQDSRPTPMRRVPGRVGGREGMRGRSPSQYHDFAEKLKMSPGRSRGPGGDPHHMNPHMTFSERANRSSLHTPFSPNSETLASAYHANTRAHAYGDPNAGLNSQLHYKRQMYQQQPEEYKDWSSGSAQGVIAAAQHRQEGPRKSPRQQQFLDRVRSPLKNDKDGMMYGPPVGTYHDPSAQEAGRCLMSSDGLPNKGMELKHGSQKLQESCWDLSRQTSPAKSSGPPGMSSQKRYGPPHETDGHGLAEATQSSKPGSVMLRLPGQEDHSSQNPLIMRRRVRSFISPIPSKRQSQDVKNSSTEDKGRLLHSSKEGADKAFNSYAHLSHSQDIKSIPKRDSSKDLPSPDSRNCPAVTLTSPAKTKILPPRKGRGLKLEAIVQKITSPNIRRSASSNSAEAGGDTVTLDDILSLKSGPPEGGSVAVQDADIEKRKGEVASDLVSPANQELHVEKPLPRSSEEWRGSVDDKVKTETHAETVTAGKEPPGAMTSTTSQKPGSNQGRPDGSLGGTAPLIFPDSKNVPPVGILAPEANPKAEEKENDTVTISPKQEGFPPKGYFPSGKKKGRPIGSVNKQKKQQQPPPPPPQPPQIPEGSADGEPKPKKQRQRRERRKPGAQPRKRKTKQAVPIVEPQEPEIKLKYATQPLDKTDAKNKSFYPYIHVVNKCELGAVCTIINAEEEEQTKLVRGRKGQRSLTPPPSSTESKALPASSFMLQGPVVTESSVMGHLVCCLCGKWASYRNMGDLFGPFYPQDYAATLPKNPPPKRATEMQSKVKVRHKSASNGSKTDTEEEEEQQQQQKEQRSLAAHPRFKRRHRSEDCGGGPRSLSRGLPCKKAATEGSSEKTVLDSKPSVPTTSEGGPELELQIPELPLDSNEFWVHEGCILWANGIYLVCGRLYGLQEALEIAREMKCSHCQEAGATLGCYNKGCSFRYHYPCAIDADCLLHEENFSVRCPKHKPPLPCPLPPLQNKTAKGSLSTEQSERG.

The span at 1 to 18 (MQSFREQSSYHGNQQSYP) shows a compositional bias: polar residues. A disordered region spans residues 1 to 287 (MQSFREQSSY…GSNAQAYGTQ (287 aa)). Gly residues predominate over residues 42 to 60 (GGTGGSSGSSGSGSGGGRR). R60 carries the post-translational modification Omega-N-methylarginine. Positions 61-75 (GAAAAAAAMASETSG) are enriched in low complexity. Polar residues predominate over residues 122-131 (QGSSFGNQYG). A compositionally biased stretch (low complexity) spans 164–192 (SAQYQQQASSQQQQQQVQQLRQQLYQSHQ). Residues 193-219 (PLPQATGQPASSSSHLQPMQRPSTLPS) are compositionally biased toward polar residues. Residues 236-259 (QSSASSSSSSSFPSPQRFSQSGQS) are compositionally biased toward low complexity. 2 stretches are compositionally biased toward polar residues: residues 260 to 270 (YDGSYNVNAGS) and 277 to 287 (VGSNAQAYGTQ). Residue K304 forms a Glycyl lysine isopeptide (Lys-Gly) (interchain with G-Cter in SUMO2) linkage. 2 disordered regions span residues 305–328 (IPQG…SQHV) and 360–392 (FHQN…LMQT). Low complexity-rich tracts occupy residues 306-322 (PQGT…QQQQ) and 368-388 (SNPS…TPSP). 2 positions are modified to phosphoserine: S419 and S430. The tract at residues 476–748 (SDALTPQKKT…HGERKGRNEK (273 aa)) is disordered. Composition is skewed to polar residues over residues 497–508 (SCTNSEGSSQPE) and 537–547 (LSGQSTSSDTT). Phosphoserine is present on residues S538, S559, S574, and S583. The residue at position 602 (K602) is an N6-acetyllysine. Residues 616–628 (RVEKPGGQDKGSQ) show a composition bias toward basic and acidic residues. S640 is subject to Phosphoserine. The segment covering 665 to 677 (GNKNGDNNSNHNG) has biased composition (low complexity). Residues 693–702 (TSRTEPSKSP) are compositionally biased toward polar residues. Residues K710, K733, K748, K823, K832, and K844 each participate in a glycyl lysine isopeptide (Lys-Gly) (interchain with G-Cter in SUMO2) cross-link. The segment covering 732–748 (EKGDFTGHGERKGRNEK) has biased composition (basic and acidic residues). Position 871 is a phosphoserine (S871). Glycyl lysine isopeptide (Lys-Gly) (interchain with G-Cter in SUMO2) cross-links involve residues K920 and K922. Residues 920-1037 (KLKSQSGQIK…GDPHHMNPHM (118 aa)) are disordered. K929 is covalently cross-linked (Glycyl lysine isopeptide (Lys-Gly) (interchain with G-Cter in SUMO1); alternate). Residue K929 forms a Glycyl lysine isopeptide (Lys-Gly) (interchain with G-Cter in SUMO2); alternate linkage. The span at 936 to 945 (SKSQASFNNK) shows a compositional bias: polar residues. The span at 946–961 (KSGDHCHPPSIKHESY) shows a compositional bias: basic and acidic residues. K957 participates in a covalent cross-link: Glycyl lysine isopeptide (Lys-Gly) (interchain with G-Cter in SUMO2). S966 and S1005 each carry phosphoserine. Residue K1015 forms a Glycyl lysine isopeptide (Lys-Gly) (interchain with G-Cter in SUMO2) linkage. R1024 is subject to Omega-N-methylarginine. Residue S1053 is modified to Phosphoserine. Glycyl lysine isopeptide (Lys-Gly) (interchain with G-Cter in SUMO2) cross-links involve residues K1086, K1098, K1137, K1173, K1178, K1183, K1210, K1231, K1267, and K1274. 3 disordered regions span residues 1110–1142 (AAAQ…DKDG), 1162–1285 (RCLM…GRLL), and 1303–1331 (SHSQ…CPAV). Residues 1130–1142 (DRVRSPLKNDKDG) are compositionally biased toward basic and acidic residues. A leucine-zipper region spans residues 1170–1191 (LPNKGMELKHGSQKLQESCWDL). Positions 1254–1268 (RRRVRSFISPIPSKR) match the Nuclear localization signal motif. The span at 1304 to 1318 (HSQDIKSIPKRDSSK) shows a compositional bias: basic and acidic residues. S1305 carries the phosphoserine modification. A Glycyl lysine isopeptide (Lys-Gly) (interchain with G-Cter in SUMO2) cross-link involves residue K1309. At S1335 the chain carries Phosphoserine. K1338 is covalently cross-linked (Glycyl lysine isopeptide (Lys-Gly) (interchain with G-Cter in SUMO2)). S1361 is subject to Phosphoserine. The segment at 1384–1607 (DILSLKSGPP…TKQAVPIVEP (224 aa)) is disordered. Glycyl lysine isopeptide (Lys-Gly) (interchain with G-Cter in SUMO2) cross-links involve residues K1389, K1409, K1428, and K1446. The span at 1424–1451 (LHVEKPLPRSSEEWRGSVDDKVKTETHA) shows a compositional bias: basic and acidic residues. Positions 1464-1477 (MTSTTSQKPGSNQG) are enriched in polar residues. K1510 is covalently cross-linked (Glycyl lysine isopeptide (Lys-Gly) (interchain with G-Cter in SUMO2)). Residue S1522 is modified to Phosphoserine. K1524 participates in a covalent cross-link: Glycyl lysine isopeptide (Lys-Gly) (interchain with G-Cter in SUMO2). A DNA-binding region (a.T hook) is located at residues 1537–1551 (GKKKGRPIGSVNKQK). Over residues 1555 to 1566 (QPPPPPPQPPQI) the composition is skewed to pro residues. The Nuclear localization signal signature appears at 1576–1600 (KPKKQRQRRERRKPGAQPRKRKTKQ). Basic residues predominate over residues 1578 to 1599 (KKQRQRRERRKPGAQPRKRKTK). K1613 is covalently cross-linked (Glycyl lysine isopeptide (Lys-Gly) (interchain with G-Cter in SUMO2)). Disordered stretches follow at residues 1660–1683 (LVRG…KALP) and 1732–1839 (TLPK…PELE). Position 1669 is a phosphoserine (S1669). Phosphothreonine is present on residues T1671, T1762, and T1764. The Nuclear localization signal motif lies at 1785 to 1792 (RFKRRHRS). The segment at 1829–1865 (PTTSEGGPELELQIPELPLDSNEFWVHEGCILWANGI) adopts a C2HC pre-PHD-type; degenerate zinc-finger fold. Residues 1885–1933 (MKCSHCQEAGATLGCYNKGCSFRYHYPCAIDADCLLHEENFSVRCPKHK) form a PHD-type zinc finger. The segment at 1939–1960 (PLPPLQNKTAKGSLSTEQSERG) is disordered. Residues 1944 to 1960 (QNKTAKGSLSTEQSERG) show a composition bias toward polar residues.

In terms of assembly, homodimer. Interacts with RNF4 and JUN. Expressed in most tissues, except in ovary and prostate. Isoform 1 is exclusively expressed in brain, heart and testis, and this form predominates in liver and kidney. Isoform 2 predominates in lung.

Its subcellular location is the nucleus. Its function is as follows. Transcriptional activator that binds to the regulatory region of MMP3 and thereby controls stromelysin expression. It stimulates the activity of various transcriptional activators such as JUN, SP1, PAX6 and ETS1, suggesting a function as a coactivator. In Homo sapiens (Human), this protein is Transcription factor 20 (TCF20).